A 159-amino-acid polypeptide reads, in one-letter code: Antitoxin Xre (159 aa).

This sequence belongs to the MbcA/ParS/Xre antitoxin family. In terms of assembly, homodimer. Forms a complex with cognate toxin Res; the 2 toxin molecules dimerize and each contacts an Xre homodimer. Most Res-Xre contacts are between the antitoxin molecule closest to the toxin.

Probable antitoxin component of a type II toxin-antitoxin (TA) system. In vivo probably neutralizes the toxic effect of cognate toxin Res. The polypeptide is Antitoxin Xre (Pseudomonas putida (strain ATCC 47054 / DSM 6125 / CFBP 8728 / NCIMB 11950 / KT2440)).